A 392-amino-acid polypeptide reads, in one-letter code: 4-hydroxybenzoate polyprenyltransferase, mitochondrial (392 aa).

Residues 1–22 constitute a mitochondrion transit peptide; that stretch reads MYALRHLRLQSARHFRSSYAAA. Transmembrane regions (helical) follow at residues 90 to 110, 115 to 135, 163 to 183, 184 to 204, 207 to 227, 236 to 256, 283 to 303, 307 to 327, and 339 to 359; these read IGTYLLFWPCAWSIALSADAG, LTMLGLFGTGALIMRGAGCTI, FDAIVFLSAQLSLGLLVLVQL, NWQSILLGASSLGLVITYPLM, VTYWPQLVLGMAFNWGALLGW, LAACLPLYLSGVCWTIVYDTI, VWLSGFTAAMLTGLSAAGWAC, VPYYAAVGVVGAHLVQQIYSL, and FISNHQVGLILFLGIVLGTLL. The segment at 365–392 is disordered; the sequence is KKQRQSSLTTSTASSYVPALPQKPEVLS. Polar residues predominate over residues 369 to 379; that stretch reads QSSLTTSTASS.

Belongs to the UbiA prenyltransferase family. It depends on Mg(2+) as a cofactor.

It is found in the mitochondrion inner membrane. It carries out the reaction an all-trans-polyprenyl diphosphate + 4-hydroxybenzoate = a 4-hydroxy-3-(all-trans-polyprenyl)benzoate + diphosphate. It participates in cofactor biosynthesis; ubiquinone biosynthesis. Functionally, catalyzes the prenylation of para-hydroxybenzoate (PHB) with an all-trans polyprenyl group. Mediates the second step in the final reaction sequence of coenzyme Q (CoQ) biosynthesis, which is the condensation of the polyisoprenoid side chain with PHB, generating the first membrane-bound Q intermediate. This is 4-hydroxybenzoate polyprenyltransferase, mitochondrial from Drosophila melanogaster (Fruit fly).